The chain runs to 217 residues: Adenylate kinase (217 aa).

Position 10 to 15 (10 to 15 (GGGKGT)) interacts with ATP. Residues 30–59 (STGDMLRAAVASGSEVGKKAKAVMDAGQLV) form an NMP region. AMP-binding positions include T31, R36, 57–59 (QLV), 85–88 (GFPR), and Q92. Positions 126–164 (GRYTCAKCGAGYHDKFQLPQVAGKCDSCGGTEFARRPDD) are LID. R127 serves as a coordination point for ATP. Zn(2+) contacts are provided by C130, C133, C150, and C153. The AMP site is built by R161 and R172. An ATP-binding site is contributed by M200.

The protein belongs to the adenylate kinase family. As to quaternary structure, monomer.

It localises to the cytoplasm. It catalyses the reaction AMP + ATP = 2 ADP. The protein operates within purine metabolism; AMP biosynthesis via salvage pathway; AMP from ADP: step 1/1. Functionally, catalyzes the reversible transfer of the terminal phosphate group between ATP and AMP. Plays an important role in cellular energy homeostasis and in adenine nucleotide metabolism. The polypeptide is Adenylate kinase (Paramagnetospirillum magneticum (strain ATCC 700264 / AMB-1) (Magnetospirillum magneticum)).